The primary structure comprises 344 residues: tRNA N6-adenosine threonylcarbamoyltransferase (344 aa).

Fe cation contacts are provided by H112 and H116. Substrate is bound by residues 134-138, D167, G180, and N280; that span reads LASGG. D308 contributes to the Fe cation binding site.

This sequence belongs to the KAE1 / TsaD family. Fe(2+) serves as cofactor.

The protein localises to the cytoplasm. It carries out the reaction L-threonylcarbamoyladenylate + adenosine(37) in tRNA = N(6)-L-threonylcarbamoyladenosine(37) in tRNA + AMP + H(+). In terms of biological role, required for the formation of a threonylcarbamoyl group on adenosine at position 37 (t(6)A37) in tRNAs that read codons beginning with adenine. Is involved in the transfer of the threonylcarbamoyl moiety of threonylcarbamoyl-AMP (TC-AMP) to the N6 group of A37, together with TsaE and TsaB. TsaD likely plays a direct catalytic role in this reaction. The sequence is that of tRNA N6-adenosine threonylcarbamoyltransferase from Rickettsia massiliae (strain Mtu5).